We begin with the raw amino-acid sequence, 122 residues long: MAFNKEQFIADLEAMTVLELKELVSALEEHFGVTAAAPVAVAAAGGATEAAEEKTEFDVVLKSAGGNKIAVIKEVRAITGLGLKEAKDLVDNGGVIKEAAPKDEANAIKEKLTAAGAEVEVK.

The protein belongs to the bacterial ribosomal protein bL12 family. Homodimer. Part of the ribosomal stalk of the 50S ribosomal subunit. Forms a multimeric L10(L12)X complex, where L10 forms an elongated spine to which 2 to 4 L12 dimers bind in a sequential fashion. Binds GTP-bound translation factors.

Forms part of the ribosomal stalk which helps the ribosome interact with GTP-bound translation factors. Is thus essential for accurate translation. The protein is Large ribosomal subunit protein bL12 of Fusobacterium nucleatum subsp. nucleatum (strain ATCC 25586 / DSM 15643 / BCRC 10681 / CIP 101130 / JCM 8532 / KCTC 2640 / LMG 13131 / VPI 4355).